Reading from the N-terminus, the 307-residue chain is Porphobilinogen deaminase (307 aa).

At cysteine 239 the chain carries S-(dipyrrolylmethanemethyl)cysteine.

This sequence belongs to the HMBS family. As to quaternary structure, monomer. The cofactor is dipyrromethane.

It carries out the reaction 4 porphobilinogen + H2O = hydroxymethylbilane + 4 NH4(+). It functions in the pathway porphyrin-containing compound metabolism; protoporphyrin-IX biosynthesis; coproporphyrinogen-III from 5-aminolevulinate: step 2/4. In terms of biological role, tetrapolymerization of the monopyrrole PBG into the hydroxymethylbilane pre-uroporphyrinogen in several discrete steps. This Campylobacter jejuni subsp. jejuni serotype O:2 (strain ATCC 700819 / NCTC 11168) protein is Porphobilinogen deaminase (hemC).